The following is a 212-amino-acid chain: UPF0502 protein ECA2523 (212 aa).

This sequence belongs to the UPF0502 family.

The polypeptide is UPF0502 protein ECA2523 (Pectobacterium atrosepticum (strain SCRI 1043 / ATCC BAA-672) (Erwinia carotovora subsp. atroseptica)).